Reading from the N-terminus, the 371-residue chain is Cytochrome b (371 aa).

Transmembrane regions (helical) follow at residues 25 to 45, 69 to 90, 105 to 125, and 170 to 190; these read FGSM…FLAV, WMMQ…YIHI, WMSG…GYVL, and FFAL…LHVI. His-75 and His-89 together coordinate heme b. Heme b is bound by residues His-174 and His-188. An a ubiquinone-binding site is contributed by His-193. Helical transmembrane passes span 218–238, 280–300, 312–332, and 339–358; these read HKDL…VSFF, LGGA…PFTH, LSQL…WAAT, and FITI…LSIP.

This sequence belongs to the cytochrome b family. In terms of assembly, the cytochrome bc1 complex contains 3 respiratory subunits (MT-CYB, CYC1 and UQCRFS1), 2 core proteins (UQCRC1 and UQCRC2) and probably 6 low-molecular weight proteins. It depends on heme b as a cofactor.

The protein resides in the mitochondrion inner membrane. Its function is as follows. Component of the ubiquinol-cytochrome c reductase complex (complex III or cytochrome b-c1 complex) that is part of the mitochondrial respiratory chain. The b-c1 complex mediates electron transfer from ubiquinol to cytochrome c. Contributes to the generation of a proton gradient across the mitochondrial membrane that is then used for ATP synthesis. In Liasis mackloti savuensis (Savu python), this protein is Cytochrome b (MT-CYB).